Reading from the N-terminus, the 371-residue chain is MDDRPIVFFDIAIGGQLAGRVAFRLYSDLVPKTAENFRALCTGEKGLGQSGKPLWYKGSAFHRVIKGFMCQGGDFTAGNGTGGESIYGEKFEDEGFPVHHSRPFLLSMANAGPNTNGSQFFITVSATPHLDGKHVVFGEVIKGRSVVRTIENNPATNGDVPKEPVVIADCGQLSSDDPFLAERTSTDGDPYEDYPDDEDQELGNPETVLQIAKTIREVANRLYKQGDISGALQKYSKSIRYLDVHQELPENSPPDLNEQYKSLLAPLLLNSALAAIRIEPHSAANAMNAVANTSRALNRLELSNADKAKAYYRRGLAKTIMRDEVGAEQDLKTANELLPEDGAIAAELAKIIQKKKEQREREKKAYKKMFA.

The 165-residue stretch at 8–172 (FFDIAIGGQL…EPVVIADCGQ (165 aa)) folds into the PPIase cyclophilin-type domain. The interval 175–202 (SDDPFLAERTSTDGDPYEDYPDDEDQEL) is disordered. The segment covering 189–201 (DPYEDYPDDEDQE) has biased composition (acidic residues). 3 TPR repeats span residues 212-245 (AKTIREVANRLYKQGDISGALQKYSKSIRYLDVH), 265-303 (APLLLNSALAAIRIEPHSAANAMNAVANTSRALNRLELS), and 308-341 (AKAYYRRGLAKTIMRDEVGAEQDLKTANELLPED).

Belongs to the cyclophilin-type PPIase family. PPIase D subfamily.

The protein localises to the cytoplasm. The catalysed reaction is [protein]-peptidylproline (omega=180) = [protein]-peptidylproline (omega=0). Functionally, PPIases accelerate the folding of proteins. It catalyzes the cis-trans isomerization of proline imidic peptide bonds in oligopeptides. The protein is Peptidyl-prolyl cis-trans isomerase D (Cyp40) of Amanita muscaria (Fly agaric).